The primary structure comprises 837 residues: Vacuolar membrane protease (837 aa).

Residues 1–36 (MSEEEVHDTSSEASEVFTNQPNAFVRGVRSIFGYRK) are Cytoplasmic-facing. The chain crosses the membrane as a helical span at residues 37 to 57 (TSLTLFVILTIVVTAGLSFYD). Topologically, residues 58-355 (NSLELTIELP…FATPISALAR (298 aa)) are vacuolar. A glycan (N-linked (GlcNAc...) asparagine) is linked at Asn143. The Zn(2+) site is built by His157 and Asp169. Glu201 functions as the Proton acceptor in the catalytic mechanism. Zn(2+) is bound by residues Glu202, Glu227, and His299. Residues 356 to 376 (VNLVLLVLFPVVSTPLLFVIV) form a helical membrane-spanning segment. Residues 377–384 (KYKKWKLR) lie on the Cytoplasmic side of the membrane. A helical transmembrane segment spans residues 385–405 (VTNFLGVPLAMGLAVAVGQVG). The Vacuolar segment spans residues 406-415 (NPMLVSSHPM). The helical transmembrane segment at 416 to 436 (MVVATTTSIVVLVYYVVLNGV) threads the bilayer. Topologically, residues 437-446 (DWVNTSSDQK) are cytoplasmic. A helical transmembrane segment spans residues 447 to 467 (LVTMIEVSFVYWVVLVYVTWS). The Vacuolar segment spans residues 468–474 (GGDHTGE). The chain crosses the membrane as a helical span at residues 475–495 (FGVTVLFFVQASTSLLGLIGW). The Cytoplasmic portion of the chain corresponds to 496–539 (TFTRVRGGDEPLLSGEEERYGTEDERDTEKPLVEHNYDWSLQYL). The helical transmembrane segment at 540–560 (LIVPVSSLVVYNSGWLVLEGV) threads the bilayer. Asn561 is a glycosylation site (N-linked (GlcNAc...) asparagine). At 561 to 572 (NKTVQESLASEH) the chain is on the vacuolar side. Residues 573-593 (LIYWIVVVFSQFLVLPVVPFI) form a helical membrane-spanning segment. Over 594 to 598 (TKFNR) the chain is Cytoplasmic. A helical transmembrane segment spans residues 599 to 619 (YIVLGLSVVVVVGVLMSMAVH). The Vacuolar portion of the chain corresponds to 620–837 (PFNQGSPMKL…LVGVVKHVDV (218 aa)). Asn689 carries an N-linked (GlcNAc...) asparagine glycan.

Belongs to the peptidase M28 family. It depends on Zn(2+) as a cofactor.

It localises to the vacuole membrane. In terms of biological role, may be involved in vacuolar sorting and osmoregulation. The sequence is that of Vacuolar membrane protease from Candida albicans (strain SC5314 / ATCC MYA-2876) (Yeast).